Consider the following 385-residue polypeptide: Homoserine O-succinyltransferase (385 aa).

Positions 51-359 (NAILICHALS…EATEGHDAFL (309 aa)) constitute an AB hydrolase-1 domain. Ser157 serves as the catalytic Nucleophile. Arg227 contacts substrate. Residues Asp322 and His355 contribute to the active site. Residue Asp356 participates in substrate binding.

Belongs to the AB hydrolase superfamily. MetX family. As to quaternary structure, homodimer.

It localises to the cytoplasm. The enzyme catalyses L-homoserine + succinyl-CoA = O-succinyl-L-homoserine + CoA. The protein operates within amino-acid biosynthesis; L-methionine biosynthesis via de novo pathway; O-succinyl-L-homoserine from L-homoserine: step 1/1. Transfers a succinyl group from succinyl-CoA to L-homoserine, forming succinyl-L-homoserine. In Marinomonas sp. (strain MWYL1), this protein is Homoserine O-succinyltransferase.